Consider the following 724-residue polypeptide: DNA ligase (724 aa).

Residues 44 to 48 (DADYD), 93 to 94 (SL), and E127 each bind NAD(+). Residue K129 is the N6-AMP-lysine intermediate of the active site. The NAD(+) site is built by R150, E186, K307, and K331. Residues C437, C440, C461, and C467 each coordinate Zn(2+). Residues 646-724 (TEGSPVAGKT…EDEWLALIGG (79 aa)) enclose the BRCT domain.

It belongs to the NAD-dependent DNA ligase family. LigA subfamily. Requires Mg(2+) as cofactor. It depends on Mn(2+) as a cofactor.

The enzyme catalyses NAD(+) + (deoxyribonucleotide)n-3'-hydroxyl + 5'-phospho-(deoxyribonucleotide)m = (deoxyribonucleotide)n+m + AMP + beta-nicotinamide D-nucleotide.. Functionally, DNA ligase that catalyzes the formation of phosphodiester linkages between 5'-phosphoryl and 3'-hydroxyl groups in double-stranded DNA using NAD as a coenzyme and as the energy source for the reaction. It is essential for DNA replication and repair of damaged DNA. In Agrobacterium fabrum (strain C58 / ATCC 33970) (Agrobacterium tumefaciens (strain C58)), this protein is DNA ligase.